A 124-amino-acid polypeptide reads, in one-letter code: Ribonuclease pancreatic (124 aa).

Basic and acidic residues predominate over residues Lys1 to Ile13. Residues Lys1–Asn24 are disordered. Substrate is bound by residues Lys7 and Arg10. His12 functions as the Proton acceptor in the catalytic mechanism. The segment covering Ser15 to Asn24 has biased composition (low complexity). 4 cysteine pairs are disulfide-bonded: Cys26-Cys84, Cys40-Cys95, Cys58-Cys110, and Cys65-Cys72. Asn34 carries N-linked (GlcNAc...) asparagine; partial glycosylation. Substrate-binding positions include Lys41 to Thr45, Lys66, and Arg85. The Proton donor role is filled by His119.

This sequence belongs to the pancreatic ribonuclease family. As to quaternary structure, monomer. Interacts with and forms tight 1:1 complexes with RNH1. Dimerization of two such complexes may occur. Interaction with RNH1 inhibits this protein. Pancreas.

Its subcellular location is the secreted. The enzyme catalyses an [RNA] containing cytidine + H2O = an [RNA]-3'-cytidine-3'-phosphate + a 5'-hydroxy-ribonucleotide-3'-[RNA].. It carries out the reaction an [RNA] containing uridine + H2O = an [RNA]-3'-uridine-3'-phosphate + a 5'-hydroxy-ribonucleotide-3'-[RNA].. Endonuclease that catalyzes the cleavage of RNA on the 3' side of pyrimidine nucleotides. Acts on single-stranded and double-stranded RNA. This Antilocapra americana (Pronghorn) protein is Ribonuclease pancreatic (RNASE1).